The primary structure comprises 222 residues: Ribonuclease T (222 aa).

The 175-residue stretch at 20 to 194 folds into the Exonuclease domain; it reads VVIDVETAGF…YDTERTAELF (175 aa). Mg(2+) contacts are provided by D23, E25, H181, and D186. The active-site Proton donor/acceptor is H181.

It belongs to the RNase T family. Homodimer. The cofactor is Mg(2+).

Trims short 3' overhangs of a variety of RNA species, leaving a one or two nucleotide 3' overhang. Responsible for the end-turnover of tRNA: specifically removes the terminal AMP residue from uncharged tRNA (tRNA-C-C-A). Also appears to be involved in tRNA biosynthesis. The chain is Ribonuclease T from Shewanella oneidensis (strain ATCC 700550 / JCM 31522 / CIP 106686 / LMG 19005 / NCIMB 14063 / MR-1).